The primary structure comprises 443 residues: Ribosomal protein uS12 methylthiotransferase RimO (443 aa).

The 111-residue stretch at 8 to 118 (PKVGFVSLGC…VVNAVHEVVP (111 aa)) folds into the MTTase N-terminal domain. [4Fe-4S] cluster-binding residues include Cys17, Cys53, Cys82, Cys151, Cys155, and Cys158. In terms of domain architecture, Radical SAM core spans 137-375 (LTPRHYAYLK…MAHQQAISTA (239 aa)). Positions 378-443 (QLRIGKEIEV…DEYDMWAEPI (66 aa)) constitute a TRAM domain.

It belongs to the methylthiotransferase family. RimO subfamily. [4Fe-4S] cluster is required as a cofactor.

The protein resides in the cytoplasm. It carries out the reaction L-aspartate(89)-[ribosomal protein uS12]-hydrogen + (sulfur carrier)-SH + AH2 + 2 S-adenosyl-L-methionine = 3-methylsulfanyl-L-aspartate(89)-[ribosomal protein uS12]-hydrogen + (sulfur carrier)-H + 5'-deoxyadenosine + L-methionine + A + S-adenosyl-L-homocysteine + 2 H(+). Catalyzes the methylthiolation of an aspartic acid residue of ribosomal protein uS12. The chain is Ribosomal protein uS12 methylthiotransferase RimO from Pseudomonas putida (strain GB-1).